The sequence spans 177 residues: Large ribosomal subunit protein uL6 (177 aa).

It belongs to the universal ribosomal protein uL6 family. In terms of assembly, part of the 50S ribosomal subunit.

In terms of biological role, this protein binds to the 23S rRNA, and is important in its secondary structure. It is located near the subunit interface in the base of the L7/L12 stalk, and near the tRNA binding site of the peptidyltransferase center. In Erythrobacter litoralis (strain HTCC2594), this protein is Large ribosomal subunit protein uL6.